The sequence spans 627 residues: Asparagine synthetase domain-containing protein 1 (627 aa).

Cys-2 functions as the For GATase activity in the catalytic mechanism. Positions 2–184 constitute a Glutamine amidotransferase type-2 domain; the sequence is CGICCSVSFS…ASGIFQIDLN (183 aa). The 290-residue stretch at 308-597 folds into the Asparagine synthetase domain; it reads ASKEVLKTCS…GLPASALLPK (290 aa). The tract at residues 373-404 is disordered; that stretch reads QQNHHEIPSEESSQSPAADEGPGEAEVPDRVT.

The sequence is that of Asparagine synthetase domain-containing protein 1 (Asnsd1) from Mus musculus (Mouse).